A 151-amino-acid chain; its full sequence is 6,7-dimethyl-8-ribityllumazine synthase (151 aa).

Residues F15, 47–49, and 71–73 contribute to the 5-amino-6-(D-ribitylamino)uracil site; these read TFE and AVI. A (2S)-2-hydroxy-3-oxobutyl phosphate-binding site is contributed by 76-77; the sequence is ET. The active-site Proton donor is H79. A 5-amino-6-(D-ribitylamino)uracil-binding site is contributed by L104. R119 lines the (2S)-2-hydroxy-3-oxobutyl phosphate pocket.

Belongs to the DMRL synthase family.

It carries out the reaction (2S)-2-hydroxy-3-oxobutyl phosphate + 5-amino-6-(D-ribitylamino)uracil = 6,7-dimethyl-8-(1-D-ribityl)lumazine + phosphate + 2 H2O + H(+). The protein operates within cofactor biosynthesis; riboflavin biosynthesis; riboflavin from 2-hydroxy-3-oxobutyl phosphate and 5-amino-6-(D-ribitylamino)uracil: step 1/2. Catalyzes the formation of 6,7-dimethyl-8-ribityllumazine by condensation of 5-amino-6-(D-ribitylamino)uracil with 3,4-dihydroxy-2-butanone 4-phosphate. This is the penultimate step in the biosynthesis of riboflavin. The polypeptide is 6,7-dimethyl-8-ribityllumazine synthase (Metallosphaera sedula (strain ATCC 51363 / DSM 5348 / JCM 9185 / NBRC 15509 / TH2)).